Reading from the N-terminus, the 431-residue chain is Glucose-1-phosphate adenylyltransferase (431 aa).

A beta-D-fructose 1,6-bisphosphate-binding site is contributed by lysine 39. AMP-binding residues include arginine 40, histidine 46, and arginine 52. Residue tyrosine 114 participates in alpha-D-glucose 1-phosphate binding. Arginine 130 lines the AMP pocket. Alpha-D-glucose 1-phosphate-binding positions include glycine 179, 194–195, and serine 212; that span reads EK. AMP-binding residues include glutamate 370 and arginine 386. Beta-D-fructose 1,6-bisphosphate is bound by residues 419 to 423 and 429 to 431; these read REMLR and QER.

Belongs to the bacterial/plant glucose-1-phosphate adenylyltransferase family. Homotetramer.

It catalyses the reaction alpha-D-glucose 1-phosphate + ATP + H(+) = ADP-alpha-D-glucose + diphosphate. Its pathway is glycan biosynthesis; glycogen biosynthesis. With respect to regulation, allosterically activated by fructose-1,6-bisphosphate (F16BP) and inhibited by AMP. Functionally, involved in the biosynthesis of ADP-glucose, a building block required for the elongation reactions to produce glycogen. Catalyzes the reaction between ATP and alpha-D-glucose 1-phosphate (G1P) to produce pyrophosphate and ADP-Glc. In Salmonella arizonae (strain ATCC BAA-731 / CDC346-86 / RSK2980), this protein is Glucose-1-phosphate adenylyltransferase.